The following is a 135-amino-acid chain: Small ribosomal subunit protein bS6 (135 aa).

Over residues glutamine 99–threonine 120 the composition is skewed to polar residues. Positions glutamine 99–alanine 135 are disordered.

It belongs to the bacterial ribosomal protein bS6 family.

Functionally, binds together with bS18 to 16S ribosomal RNA. This Synechococcus sp. (strain RCC307) protein is Small ribosomal subunit protein bS6.